Reading from the N-terminus, the 437-residue chain is ATP-dependent protease ATPase subunit HslU (437 aa).

ATP is bound by residues valine 18, 60–65 (GCGKTE), aspartate 250, glutamate 315, and arginine 387.

Belongs to the ClpX chaperone family. HslU subfamily. As to quaternary structure, a double ring-shaped homohexamer of HslV is capped on each side by a ring-shaped HslU homohexamer. The assembly of the HslU/HslV complex is dependent on binding of ATP.

The protein localises to the cytoplasm. Its function is as follows. ATPase subunit of a proteasome-like degradation complex; this subunit has chaperone activity. The binding of ATP and its subsequent hydrolysis by HslU are essential for unfolding of protein substrates subsequently hydrolyzed by HslV. HslU recognizes the N-terminal part of its protein substrates and unfolds these before they are guided to HslV for hydrolysis. The chain is ATP-dependent protease ATPase subunit HslU from Methylobacterium nodulans (strain LMG 21967 / CNCM I-2342 / ORS 2060).